The sequence spans 159 residues: Ribosomal RNA large subunit methyltransferase H (159 aa).

Residues leucine 76, glycine 108, and phenylalanine 127 to phenylalanine 132 contribute to the S-adenosyl-L-methionine site.

The protein belongs to the RNA methyltransferase RlmH family. In terms of assembly, homodimer.

It localises to the cytoplasm. The catalysed reaction is pseudouridine(1915) in 23S rRNA + S-adenosyl-L-methionine = N(3)-methylpseudouridine(1915) in 23S rRNA + S-adenosyl-L-homocysteine + H(+). Specifically methylates the pseudouridine at position 1915 (m3Psi1915) in 23S rRNA. The polypeptide is Ribosomal RNA large subunit methyltransferase H (Clostridium botulinum (strain Okra / Type B1)).